Here is a 115-residue protein sequence, read N- to C-terminus: V-type proton ATPase subunit G (115 aa).

This sequence belongs to the V-ATPase G subunit family. V-ATPase is a heteromultimeric enzyme composed of a peripheral catalytic V1 complex (components A to H) attached to an integral membrane V0 proton pore complex (components: a, c, c', c'', d, e, f and VOA1).

It localises to the vacuole membrane. Subunit of the V1 complex of vacuolar(H+)-ATPase (V-ATPase), a multisubunit enzyme composed of a peripheral complex (V1) that hydrolyzes ATP and a membrane integral complex (V0) that translocates protons. V-ATPase is responsible for acidifying and maintaining the pH of intracellular compartments. In Neurospora crassa (strain ATCC 24698 / 74-OR23-1A / CBS 708.71 / DSM 1257 / FGSC 987), this protein is V-type proton ATPase subunit G (vma-10).